A 251-amino-acid chain; its full sequence is Ditrans,polycis-undecaprenyl-diphosphate synthase ((2E,6E)-farnesyl-diphosphate specific) (251 aa).

Aspartate 19 is a catalytic residue. Aspartate 19 provides a ligand contact to Mg(2+). Residues 20–23 (GNNR), tryptophan 24, histidine 36, and 64–66 (SSE) contribute to the substrate site. Residue asparagine 67 is the Proton acceptor of the active site. Substrate is bound by residues tryptophan 68, arginine 70, arginine 187, and 193-195 (RIS). Glutamate 206 provides a ligand contact to Mg(2+).

Belongs to the UPP synthase family. In terms of assembly, homodimer. The cofactor is Mg(2+).

The enzyme catalyses 8 isopentenyl diphosphate + (2E,6E)-farnesyl diphosphate = di-trans,octa-cis-undecaprenyl diphosphate + 8 diphosphate. In terms of biological role, catalyzes the sequential condensation of isopentenyl diphosphate (IPP) with (2E,6E)-farnesyl diphosphate (E,E-FPP) to yield (2Z,6Z,10Z,14Z,18Z,22Z,26Z,30Z,34E,38E)-undecaprenyl diphosphate (di-trans,octa-cis-UPP). UPP is the precursor of glycosyl carrier lipid in the biosynthesis of bacterial cell wall polysaccharide components such as peptidoglycan and lipopolysaccharide. The sequence is that of Ditrans,polycis-undecaprenyl-diphosphate synthase ((2E,6E)-farnesyl-diphosphate specific) from Pseudomonas aeruginosa (strain ATCC 15692 / DSM 22644 / CIP 104116 / JCM 14847 / LMG 12228 / 1C / PRS 101 / PAO1).